The primary structure comprises 94 residues: Large ribosomal subunit protein eL43A (94 aa).

The C4-type zinc finger occupies C39 to C62.

This sequence belongs to the eukaryotic ribosomal protein eL43 family. As to quaternary structure, component of the large ribosomal subunit (LSU). Mature yeast ribosomes consist of a small (40S) and a large (60S) subunit. The 40S small subunit contains 1 molecule of ribosomal RNA (18S rRNA) and at least 33 different proteins. The large 60S subunit contains 3 rRNA molecules (25S, 5.8S and 5S rRNA) and at least 46 different proteins.

The protein resides in the cytoplasm. Functionally, component of the ribosome, a large ribonucleoprotein complex responsible for the synthesis of proteins in the cell. The small ribosomal subunit (SSU) binds messenger RNAs (mRNAs) and translates the encoded message by selecting cognate aminoacyl-transfer RNA (tRNA) molecules. The large subunit (LSU) contains the ribosomal catalytic site termed the peptidyl transferase center (PTC), which catalyzes the formation of peptide bonds, thereby polymerizing the amino acids delivered by tRNAs into a polypeptide chain. The nascent polypeptides leave the ribosome through a tunnel in the LSU and interact with protein factors that function in enzymatic processing, targeting, and the membrane insertion of nascent chains at the exit of the ribosomal tunnel. This chain is Large ribosomal subunit protein eL43A (rpl4301), found in Schizosaccharomyces pombe (strain 972 / ATCC 24843) (Fission yeast).